A 557-amino-acid chain; its full sequence is Dihydroxy-acid dehydratase (557 aa).

D78 provides a ligand contact to Mg(2+). C119 is a [2Fe-2S] cluster binding site. Mg(2+)-binding residues include D120 and K121. K121 carries the post-translational modification N6-carboxylysine. C192 is a binding site for [2Fe-2S] cluster. Residue E442 participates in Mg(2+) binding. The active-site Proton acceptor is S468.

This sequence belongs to the IlvD/Edd family. Homodimer. Requires [2Fe-2S] cluster as cofactor. Mg(2+) is required as a cofactor.

The catalysed reaction is (2R)-2,3-dihydroxy-3-methylbutanoate = 3-methyl-2-oxobutanoate + H2O. It catalyses the reaction (2R,3R)-2,3-dihydroxy-3-methylpentanoate = (S)-3-methyl-2-oxopentanoate + H2O. The protein operates within amino-acid biosynthesis; L-isoleucine biosynthesis; L-isoleucine from 2-oxobutanoate: step 3/4. Its pathway is amino-acid biosynthesis; L-valine biosynthesis; L-valine from pyruvate: step 3/4. Functionally, functions in the biosynthesis of branched-chain amino acids. Catalyzes the dehydration of (2R,3R)-2,3-dihydroxy-3-methylpentanoate (2,3-dihydroxy-3-methylvalerate) into 2-oxo-3-methylpentanoate (2-oxo-3-methylvalerate) and of (2R)-2,3-dihydroxy-3-methylbutanoate (2,3-dihydroxyisovalerate) into 2-oxo-3-methylbutanoate (2-oxoisovalerate), the penultimate precursor to L-isoleucine and L-valine, respectively. The chain is Dihydroxy-acid dehydratase from Bacillus mycoides (strain KBAB4) (Bacillus weihenstephanensis).